Consider the following 257-residue polypeptide: Phosphonates import ATP-binding protein PhnC 1 (257 aa).

The ABC transporter domain maps to 2–246 (IELKNVSKVY…VFKDIYGRPL (245 aa)). Residue 35–42 (GLSGAGKS) coordinates ATP.

This sequence belongs to the ABC transporter superfamily. Phosphonates importer (TC 3.A.1.9.1) family. The complex is composed of two ATP-binding proteins (PhnC), two transmembrane proteins (PhnE) and a solute-binding protein (PhnD).

It is found in the cell membrane. It catalyses the reaction phosphonate(out) + ATP + H2O = phosphonate(in) + ADP + phosphate + H(+). Functionally, part of the ABC transporter complex PhnCDE involved in phosphonates import. Responsible for energy coupling to the transport system. In Halalkalibacterium halodurans (strain ATCC BAA-125 / DSM 18197 / FERM 7344 / JCM 9153 / C-125) (Bacillus halodurans), this protein is Phosphonates import ATP-binding protein PhnC 1.